A 412-amino-acid chain; its full sequence is Putative oxidoreductase bli-4, mitochondrial (412 aa).

Residues 1 to 55 constitute a mitochondrion transit peptide; the sequence is MSTKLCQRIARTATLSPTSLVPRSSRLIPIVSSAAVRPSSAIPTRRPFSTTESRY. 8 residues coordinate NADP(+): isoleucine 108, asparagine 120, asparagine 186, tyrosine 269, lysine 273, valine 308, threonine 310, and glutamine 312. The active-site Proton donor is tyrosine 269. The Lowers pKa of active site Tyr role is filled by lysine 273.

Belongs to the short-chain dehydrogenases/reductases (SDR) family.

The protein localises to the mitochondrion. In terms of biological role, may play a role as an NAD-dependent dehydrogenase in the mitochondria. This chain is Putative oxidoreductase bli-4, mitochondrial (bli-4), found in Neurospora crassa (strain ATCC 24698 / 74-OR23-1A / CBS 708.71 / DSM 1257 / FGSC 987).